The primary structure comprises 621 residues: E3 SUMO-protein ligase PIAS2 (621 aa).

The region spanning 11-45 (VSSFRVSELQVLLGFAGRNKSGRKHDLLMRALHLL) is the SAP domain. Residues 19 to 23 (LQVLL) carry the LXXLL motif motif. Residues Lys-46 and Lys-249 each participate in a glycyl lysine isopeptide (Lys-Gly) (interchain with G-Cter in SUMO2) cross-link. In terms of domain architecture, PINIT spans 134–299 (QPSPPIPPVH…SMSVYLVRQL (166 aa)). Residues 331 to 412 (PDSEIATTSL…FMEILNDCSD (82 aa)) form an SP-RING-type zinc finger. Residues Cys-362, His-364, Cys-385, and Cys-388 each contribute to the Zn(2+) site. Residues Lys-430, Lys-435, Lys-443, and Lys-452 each participate in a glycyl lysine isopeptide (Lys-Gly) (interchain with G-Cter in SUMO2) cross-link. Residues 467 to 473 (IDVIDLT) are SUMO1-binding. Ser-476, Ser-477, and Ser-478 each carry phosphoserine. Residues 484–492 (PPAKRKCIF) carry the Nuclear localization signal motif. Residue Lys-489 forms a Glycyl lysine isopeptide (Lys-Gly) (interchain with G-Cter in SUMO2) linkage. The residue at position 499 (Ser-499) is a Phosphoserine. Lys-502 participates in a covalent cross-link: Glycyl lysine isopeptide (Lys-Gly) (interchain with G-Cter in SUMO2). The span at 577–610 (TASSTSVTTTSPHESSTHVSSSSSRSETGVITSS) shows a compositional bias: low complexity. The interval 577-621 (TASSTSVTTTSPHESSTHVSSSSSRSETGVITSSGRNIPDIISLD) is disordered.

It belongs to the PIAS family. Binds SUMO1 and UBE2I. Interacts with AXIN1, JUN, MDM2, PARK7, TP53 and TP73 isoform alpha, but not TP73 isoform beta. Interacts with STAT4 following IL12 and IFN-alpha stimulation of T-cells. Interacts also with GTF2I, GTF2IRD1, IKFZ1, DAB2 and MSX2, as well as with several steroid receptors, including ESR1, ESR2, NR3C1, PGR, AR, and with NCOA2. Sumoylation of a target protein seems to enhance the interaction. Binds to sumoylated ELK1. Interacts with PLAG1. Binds DNA, such as CDKN1A promoter, in a sequence-specific manner. Interacts with KLF8; the interaction results in SUMO ligation and repression of KLF8 transcriptional activity and of its cell cycle progression into G(1) phase. Interacts with IFIH1/MDA5. Interacts with PML. Interacts with PRDM1. Post-translationally, sumoylated.

It localises to the nucleus speckle. It is found in the nucleus. Its subcellular location is the PML body. The enzyme catalyses S-ubiquitinyl-[E2 ubiquitin-conjugating enzyme]-L-cysteine + [acceptor protein]-L-lysine = [E2 ubiquitin-conjugating enzyme]-L-cysteine + N(6)-ubiquitinyl-[acceptor protein]-L-lysine.. The protein operates within protein modification; protein sumoylation. Functions as an E3-type small ubiquitin-like modifier (SUMO) ligase, stabilizing the interaction between UBE2I and the substrate, and as a SUMO-tethering factor. Plays a crucial role as a transcriptional coregulation in various cellular pathways, including the STAT pathway, the p53 pathway and the steroid hormone signaling pathway. The effects of this transcriptional coregulation, transactivation or silencing may vary depending upon the biological context and PIAS2 isoform studied. However, it seems to be mostly involved in gene silencing. Binds to sumoylated ELK1 and enhances its transcriptional activity by preventing recruitment of HDAC2 by ELK1, thus reversing SUMO-mediated repression of ELK1 transactivation activity. Isoform PIASx-beta, but not isoform PIASx-alpha, promotes MDM2 sumoylation. Isoform PIASx-alpha promotes PARK7 sumoylation. Isoform PIASx-beta promotes NCOA2 sumoylation more efficiently than isoform PIASx-alpha. Sumoylates PML at'Lys-65' and 'Lys-160'. This chain is E3 SUMO-protein ligase PIAS2 (Pias2), found in Mus musculus (Mouse).